Here is a 220-residue protein sequence, read N- to C-terminus: Urease accessory protein UreF (220 aa).

This sequence belongs to the UreF family. In terms of assembly, ureD, UreF and UreG form a complex that acts as a GTP-hydrolysis-dependent molecular chaperone, activating the urease apoprotein by helping to assemble the nickel containing metallocenter of UreC. The UreE protein probably delivers the nickel.

It is found in the cytoplasm. Its function is as follows. Required for maturation of urease via the functional incorporation of the urease nickel metallocenter. This Bordetella parapertussis (strain 12822 / ATCC BAA-587 / NCTC 13253) protein is Urease accessory protein UreF.